The following is a 299-amino-acid chain: Ribosomal RNA small subunit methyltransferase H (299 aa).

S-adenosyl-L-methionine-binding positions include 36 to 38 (GGH), aspartate 55, phenylalanine 82, aspartate 97, and glutamine 104.

Belongs to the methyltransferase superfamily. RsmH family.

It localises to the cytoplasm. The enzyme catalyses cytidine(1402) in 16S rRNA + S-adenosyl-L-methionine = N(4)-methylcytidine(1402) in 16S rRNA + S-adenosyl-L-homocysteine + H(+). Its function is as follows. Specifically methylates the N4 position of cytidine in position 1402 (C1402) of 16S rRNA. This Synechococcus sp. (strain RCC307) protein is Ribosomal RNA small subunit methyltransferase H.